The chain runs to 174 residues: Cytochrome c oxidase subunit 5A, mitochondrial (174 aa).

Residues 1 to 29 constitute a mitochondrion transit peptide; sequence MASLTRAVTRLAIAGRQAVRTIATTTPVS.

Belongs to the cytochrome c oxidase subunit 5A family. In terms of assembly, component of the cytochrome c oxidase (complex IV, CIV), a multisubunit enzyme composed of a catalytic core of 3 subunits and several supernumerary subunits. The complex exists as a monomer or a dimer and forms supercomplexes (SCs) in the inner mitochondrial membrane with ubiquinol-cytochrome c oxidoreductase (cytochrome b-c1 complex, complex III, CIII).

The protein localises to the mitochondrion inner membrane. It functions in the pathway energy metabolism; oxidative phosphorylation. In terms of biological role, component of the cytochrome c oxidase, the last enzyme in the mitochondrial electron transport chain which drives oxidative phosphorylation. The respiratory chain contains 3 multisubunit complexes succinate dehydrogenase (complex II, CII), ubiquinol-cytochrome c oxidoreductase (cytochrome b-c1 complex, complex III, CIII) and cytochrome c oxidase (complex IV, CIV), that cooperate to transfer electrons derived from NADH and succinate to molecular oxygen, creating an electrochemical gradient over the inner membrane that drives transmembrane transport and the ATP synthase. Cytochrome c oxidase is the component of the respiratory chain that catalyzes the reduction of oxygen to water. Electrons originating from reduced cytochrome c in the intermembrane space (IMS) are transferred via the dinuclear copper A center (CU(A)) of subunit 2 and heme A of subunit 1 to the active site in subunit 1, a binuclear center (BNC) formed by heme A3 and copper B (CU(B)). The BNC reduces molecular oxygen to 2 water molecules using 4 electrons from cytochrome c in the IMS and 4 protons from the mitochondrial matrix. The protein is Cytochrome c oxidase subunit 5A, mitochondrial of Caenorhabditis elegans.